The following is a 122-amino-acid chain: Large ribosomal subunit protein uL14 (122 aa).

It belongs to the universal ribosomal protein uL14 family. As to quaternary structure, part of the 50S ribosomal subunit. Forms a cluster with proteins L3 and L19. In the 70S ribosome, L14 and L19 interact and together make contacts with the 16S rRNA in bridges B5 and B8.

In terms of biological role, binds to 23S rRNA. Forms part of two intersubunit bridges in the 70S ribosome. This Exiguobacterium sibiricum (strain DSM 17290 / CCUG 55495 / CIP 109462 / JCM 13490 / 255-15) protein is Large ribosomal subunit protein uL14.